A 186-amino-acid chain; its full sequence is Elongation factor P (186 aa).

The protein belongs to the elongation factor P family.

The protein localises to the cytoplasm. It functions in the pathway protein biosynthesis; polypeptide chain elongation. Functionally, involved in peptide bond synthesis. Stimulates efficient translation and peptide-bond synthesis on native or reconstituted 70S ribosomes in vitro. Probably functions indirectly by altering the affinity of the ribosome for aminoacyl-tRNA, thus increasing their reactivity as acceptors for peptidyl transferase. In Shewanella loihica (strain ATCC BAA-1088 / PV-4), this protein is Elongation factor P.